The primary structure comprises 346 residues: Lipooligosaccharide heptosyltransferase 2 (346 aa).

This sequence belongs to the glycosyltransferase 9 family.

The catalysed reaction is an L-alpha-D-Hep-(1-&gt;5)-[alpha-Kdo-(2-&gt;4)]-alpha-Kdo-(2-&gt;6)-lipid A + ADP-L-glycero-beta-D-manno-heptose = an L-alpha-D-Hep-(1-&gt;3)-L-alpha-D-Hep-(1-&gt;5)-[alpha-Kdo-(2-&gt;4)]-alpha-Kdo-(2-&gt;6)-lipid A + ADP + H(+). The protein operates within bacterial outer membrane biogenesis; LOS core biosynthesis. Its function is as follows. Glycosyltransferase involved in the biosynthesis of the core oligosaccharide region of lipooligosaccharide (LOS). Catalyzes the addition of a heptose unit to the heptosyl-Kdo2-lipid A module. This is Lipooligosaccharide heptosyltransferase 2 (waaF) from Haemophilus influenzae (strain ATCC 51907 / DSM 11121 / KW20 / Rd).